Reading from the N-terminus, the 356-residue chain is Probable dual-specificity RNA methyltransferase RlmN (356 aa).

Glutamate 92 (proton acceptor) is an active-site residue. Positions 98-336 (HKYGFSVCVT…CGVRLEHGTD (239 aa)) constitute a Radical SAM core domain. A disulfide bridge connects residues cysteine 105 and cysteine 341. [4Fe-4S] cluster is bound by residues cysteine 112, cysteine 116, and cysteine 119. Residues 164-165 (GE), serine 196, 219-221 (SLH), and asparagine 297 each bind S-adenosyl-L-methionine. Cysteine 341 serves as the catalytic S-methylcysteine intermediate.

The protein belongs to the radical SAM superfamily. RlmN family. [4Fe-4S] cluster serves as cofactor.

It localises to the cytoplasm. The catalysed reaction is adenosine(2503) in 23S rRNA + 2 reduced [2Fe-2S]-[ferredoxin] + 2 S-adenosyl-L-methionine = 2-methyladenosine(2503) in 23S rRNA + 5'-deoxyadenosine + L-methionine + 2 oxidized [2Fe-2S]-[ferredoxin] + S-adenosyl-L-homocysteine. It carries out the reaction adenosine(37) in tRNA + 2 reduced [2Fe-2S]-[ferredoxin] + 2 S-adenosyl-L-methionine = 2-methyladenosine(37) in tRNA + 5'-deoxyadenosine + L-methionine + 2 oxidized [2Fe-2S]-[ferredoxin] + S-adenosyl-L-homocysteine. Specifically methylates position 2 of adenine 2503 in 23S rRNA and position 2 of adenine 37 in tRNAs. In Shouchella clausii (strain KSM-K16) (Alkalihalobacillus clausii), this protein is Probable dual-specificity RNA methyltransferase RlmN.